Here is a 292-residue protein sequence, read N- to C-terminus: Ribosomal RNA small subunit methyltransferase I (292 aa).

This sequence belongs to the methyltransferase superfamily. RsmI family.

It localises to the cytoplasm. The catalysed reaction is cytidine(1402) in 16S rRNA + S-adenosyl-L-methionine = 2'-O-methylcytidine(1402) in 16S rRNA + S-adenosyl-L-homocysteine + H(+). Its function is as follows. Catalyzes the 2'-O-methylation of the ribose of cytidine 1402 (C1402) in 16S rRNA. The polypeptide is Ribosomal RNA small subunit methyltransferase I (Bacillus subtilis (strain 168)).